Consider the following 380-residue polypeptide: D-threo-3-hydroxyaspartate dehydratase (380 aa).

At K43 the chain carries N6-(pyridoxal phosphate)lysine.

This sequence belongs to the DSD1 family. As to quaternary structure, monomer. It depends on pyridoxal 5'-phosphate as a cofactor. Requires Mn(2+) as cofactor. Co(2+) serves as cofactor. Ni(2+) is required as a cofactor.

It catalyses the reaction (3R)-3-hydroxy-D-aspartate = oxaloacetate + NH4(+). Strongly inhibited by hydroxylamine. Modestly inhibited by EDTA. Its function is as follows. Catalyzes the deamination of D-threo-3-hydroxyaspartate (D-THA). Also exhibits dehydratase activity towards L-threo-3-hydroxyaspartate (L-THA), L-erythro-3-hydroxyaspartate (L-EHA) and D-serine. This is D-threo-3-hydroxyaspartate dehydratase (dthadh) from Delftia sp. (strain HT23).